A 359-amino-acid polypeptide reads, in one-letter code: 4-hydroxy-3-methylbut-2-en-1-yl diphosphate synthase (flavodoxin) (359 aa).

Residues Cys-264, Cys-267, Cys-299, and Glu-306 each contribute to the [4Fe-4S] cluster site.

Belongs to the IspG family. It depends on [4Fe-4S] cluster as a cofactor.

It catalyses the reaction (2E)-4-hydroxy-3-methylbut-2-enyl diphosphate + oxidized [flavodoxin] + H2O + 2 H(+) = 2-C-methyl-D-erythritol 2,4-cyclic diphosphate + reduced [flavodoxin]. It functions in the pathway isoprenoid biosynthesis; isopentenyl diphosphate biosynthesis via DXP pathway; isopentenyl diphosphate from 1-deoxy-D-xylulose 5-phosphate: step 5/6. Converts 2C-methyl-D-erythritol 2,4-cyclodiphosphate (ME-2,4cPP) into 1-hydroxy-2-methyl-2-(E)-butenyl 4-diphosphate. In Helicobacter pylori (strain ATCC 700392 / 26695) (Campylobacter pylori), this protein is 4-hydroxy-3-methylbut-2-en-1-yl diphosphate synthase (flavodoxin).